Here is a 107-residue protein sequence, read N- to C-terminus: MKDLLGLMGKAKEMQAKFQAMQDEIATVESVGQAGGGLVSVILSGKFEMKSLKIDPSLFKEDEVEILEDLILAAHNDAKAKVEQIMQEKTKALTSGLPIPPGMKLPF.

It belongs to the YbaB/EbfC family. As to quaternary structure, homodimer.

It localises to the cytoplasm. It is found in the nucleoid. In terms of biological role, binds to DNA and alters its conformation. May be involved in regulation of gene expression, nucleoid organization and DNA protection. The polypeptide is Nucleoid-associated protein mlr5504 (Mesorhizobium japonicum (strain LMG 29417 / CECT 9101 / MAFF 303099) (Mesorhizobium loti (strain MAFF 303099))).